A 375-amino-acid polypeptide reads, in one-letter code: Ribosomal RNA large subunit methyltransferase F (375 aa).

Disordered regions lie at residues 1–39 (MKNN…AAVK) and 262–281 (NQRK…GKPT). The segment covering 27–38 (AKPKRVKKKAAV) has biased composition (basic residues).

It belongs to the methyltransferase superfamily. METTL16/RlmF family.

The protein localises to the cytoplasm. It carries out the reaction adenosine(1618) in 23S rRNA + S-adenosyl-L-methionine = N(6)-methyladenosine(1618) in 23S rRNA + S-adenosyl-L-homocysteine + H(+). In terms of biological role, specifically methylates the adenine in position 1618 of 23S rRNA. This chain is Ribosomal RNA large subunit methyltransferase F, found in Vibrio parahaemolyticus serotype O3:K6 (strain RIMD 2210633).